We begin with the raw amino-acid sequence, 268 residues long: Movement and silencing protein TGBp1 (268 aa).

One can recognise a (+)RNA virus helicase ATP-binding domain in the interval 1–138 (MEDFFNCLRS…PHHIAQAITQ (138 aa)). In terms of domain architecture, (+)RNA virus helicase C-terminal spans 139–268 (YTGFPIEAAG…CRPRDLPSEN (130 aa)).

It belongs to the Tymovirales TGBp1 protein family. In terms of assembly, homodimer and homooligomer. Interacts with capsid protein. Interacts with host AGO1; this interaction targets the host protein for degradation, thereby suppressing the antiviral RNA silencing.

It is found in the host cytoplasm. Its function is as follows. Transports viral genome to neighboring plant cells directly through plasmosdesmata, without any budding. The movement protein allows efficient cell to cell propagation, by bypassing the host cell wall barrier. Increases plasmodesma size exclusion limit. Acts as a suppressor of RNA-mediated gene silencing, also known as post-transcriptional gene silencing (PTGS), a mechanism of plant viral defense that limits the accumulation of viral RNAs. This Lolium latent virus (isolate Lolium/USA/US1/-) (LoLV) protein is Movement and silencing protein TGBp1 (ORF2).